Reading from the N-terminus, the 115-residue chain is NAD(P)H-quinone oxidoreductase subunit M (115 aa).

Belongs to the complex I NdhM subunit family. NDH-1 can be composed of about 15 different subunits; different subcomplexes with different compositions have been identified which probably have different functions.

The protein localises to the cellular thylakoid membrane. It carries out the reaction a plastoquinone + NADH + (n+1) H(+)(in) = a plastoquinol + NAD(+) + n H(+)(out). It catalyses the reaction a plastoquinone + NADPH + (n+1) H(+)(in) = a plastoquinol + NADP(+) + n H(+)(out). NDH-1 shuttles electrons from an unknown electron donor, via FMN and iron-sulfur (Fe-S) centers, to quinones in the respiratory and/or the photosynthetic chain. The immediate electron acceptor for the enzyme in this species is believed to be plastoquinone. Couples the redox reaction to proton translocation, and thus conserves the redox energy in a proton gradient. Cyanobacterial NDH-1 also plays a role in inorganic carbon-concentration. The chain is NAD(P)H-quinone oxidoreductase subunit M from Prochlorococcus marinus (strain MIT 9211).